The following is a 155-amino-acid chain: Small ribosomal subunit protein uS7c (155 aa).

The protein belongs to the universal ribosomal protein uS7 family. As to quaternary structure, part of the 30S ribosomal subunit.

It is found in the plastid. The protein localises to the chloroplast. Functionally, one of the primary rRNA binding proteins, it binds directly to 16S rRNA where it nucleates assembly of the head domain of the 30S subunit. The chain is Small ribosomal subunit protein uS7c (rps7) from Ginkgo biloba (Ginkgo).